A 90-amino-acid polypeptide reads, in one-letter code: DNA-directed RNA polymerase subunit omega (90 aa).

Belongs to the RNA polymerase subunit omega family. In terms of assembly, the RNAP catalytic core consists of 2 alpha, 1 beta, 1 beta' and 1 omega subunit. When a sigma factor is associated with the core the holoenzyme is formed, which can initiate transcription.

It catalyses the reaction RNA(n) + a ribonucleoside 5'-triphosphate = RNA(n+1) + diphosphate. Promotes RNA polymerase assembly. Latches the N- and C-terminal regions of the beta' subunit thereby facilitating its interaction with the beta and alpha subunits. The protein is DNA-directed RNA polymerase subunit omega of Streptomyces griseus subsp. griseus (strain JCM 4626 / CBS 651.72 / NBRC 13350 / KCC S-0626 / ISP 5235).